Reading from the N-terminus, the 302-residue chain is Aliphatic sulfonates import ATP-binding protein SsuB (302 aa).

The segment covering 30-57 has biased composition (low complexity); that stretch reads PATADAQHTADAQHTADAQHTADAQHTA. Positions 30–65 are disordered; that stretch reads PATADAQHTADAQHTADAQHTADAQHTAETAETRGA. Residues 70–284 enclose the ABC transporter domain; it reads IRIRGLRRTF…RRTDPAFDRL (215 aa). ATP is bound at residue 102–109; sequence GRSGSGKS.

This sequence belongs to the ABC transporter superfamily. Aliphatic sulfonates importer (TC 3.A.1.17.2) family. In terms of assembly, the complex is composed of two ATP-binding proteins (SsuB), two transmembrane proteins (SsuC) and a solute-binding protein (SsuA).

It is found in the cell membrane. It carries out the reaction ATP + H2O + aliphatic sulfonate-[sulfonate-binding protein]Side 1 = ADP + phosphate + aliphatic sulfonateSide 2 + [sulfonate-binding protein]Side 1.. In terms of biological role, part of the ABC transporter complex SsuABC involved in aliphatic sulfonates import. Responsible for energy coupling to the transport system. The polypeptide is Aliphatic sulfonates import ATP-binding protein SsuB (Frankia casuarinae (strain DSM 45818 / CECT 9043 / HFP020203 / CcI3)).